A 345-amino-acid polypeptide reads, in one-letter code: Cuticle collagen 14 (345 aa).

Triple-helical region stretches follow at residues 156-185 (GPPG…PGPP), 207-263 (GDGG…PGTY), and 268-333 (GPAG…PGSC). The tract at residues 161–345 (AGDGGRDGAD…CPPARLAPGY (185 aa)) is disordered. Composition is skewed to pro residues over residues 179–191 (IGPP…PGPD), 198–223 (PQCP…PPGA), and 278–290 (RPGP…PAGP). The segment covering 292 to 304 (GENGKGGGQGPSG) has biased composition (gly residues).

The protein belongs to the cuticular collagen family. Collagen polypeptide chains are complexed within the cuticle by disulfide bonds and other types of covalent cross-links.

Nematode cuticles are composed largely of collagen-like proteins. The cuticle functions both as an exoskeleton and as a barrier to protect the worm from its environment. The protein is Cuticle collagen 14 (col-14) of Caenorhabditis elegans.